The following is a 218-amino-acid chain: Octanoyltransferase (218 aa).

The 184-residue stretch at 30-213 folds into the BPL/LPL catalytic domain; that stretch reads GEIEDTLILV…YFSEVFNYDI (184 aa). Substrate contacts are provided by residues 75-82, 143-145, and 156-158; these read RGGDVTYH, AIG, and GFA. Catalysis depends on C174, which acts as the Acyl-thioester intermediate.

Belongs to the LipB family.

The protein resides in the cytoplasm. It catalyses the reaction octanoyl-[ACP] + L-lysyl-[protein] = N(6)-octanoyl-L-lysyl-[protein] + holo-[ACP] + H(+). The protein operates within protein modification; protein lipoylation via endogenous pathway; protein N(6)-(lipoyl)lysine from octanoyl-[acyl-carrier-protein]: step 1/2. Functionally, catalyzes the transfer of endogenously produced octanoic acid from octanoyl-acyl-carrier-protein onto the lipoyl domains of lipoate-dependent enzymes. Lipoyl-ACP can also act as a substrate although octanoyl-ACP is likely to be the physiological substrate. This chain is Octanoyltransferase, found in Alkaliphilus metalliredigens (strain QYMF).